The sequence spans 472 residues: Calcitonin gene-related peptide type 1 receptor (472 aa).

The N-terminal stretch at 1–28 (MGLLLRSALFKYIIIVLIMLNLRGYVLA) is a signal peptide. Residues 29 to 149 (EQEQGSQIPL…FTHEKVKTAL (121 aa)) lie on the Extracellular side of the membrane. Cystine bridges form between C58–C84, C75–C115, and C98–C137. 3 N-linked (GlcNAc...) asparagine glycosylation sites follow: N76, N128, and N133. A helical transmembrane segment spans residues 150–174 (NLYYLTIIGHGLSIASLLISLGIFF). Topologically, residues 175 to 185 (YFKNLSCQRIT) are cytoplasmic. Residues 186–208 (LHKNLFFSFVCNSIITIISLSAV) form a helical membrane-spanning segment. Residues 209 to 219 (ANNQALVATNP) are Extracellular-facing. A helical membrane pass occupies residues 220–248 (VSCKISQFIHLYLMGCNYFWMLCEGIYLH). The Cytoplasmic portion of the chain corresponds to 249 to 262 (TLIVVAVFAEKQHL). Residues 263–283 (MWYYLLGWGFPLIPACIHAVA) traverse the membrane as a helical segment. Topologically, residues 284 to 299 (RSLYYNDNCWISSETH) are extracellular. Residues 300-324 (LLYIIHGPICAALLVNLFFLLNIVR) traverse the membrane as a helical segment. Residues 325–339 (VLITKLKVTHQAESN) lie on the Cytoplasmic side of the membrane. A helical transmembrane segment spans residues 340-361 (LYMKAVRATLILVPLLGIEFVL). Residues 362-376 (FPWKPEGRIAEEIYD) lie on the Extracellular side of the membrane. Residues 377–397 (YVMHILMHYQGLLVATIFCFF) form a helical membrane-spanning segment. The Cytoplasmic segment spans residues 398–472 (NGEVQAVLKR…VFFKTEKQYM (75 aa)).

This sequence belongs to the G-protein coupled receptor 2 family.

It is found in the cell membrane. Its function is as follows. May function as G protein-coupled receptor for calcitonin-gene-related peptides and adrenomedullin. Specificity may be modulated by accessory proteins. May activate cAMP-dependent pathway. This chain is Calcitonin gene-related peptide type 1 receptor (calcrl), found in Xenopus tropicalis (Western clawed frog).